Reading from the N-terminus, the 146-residue chain is UPF0260 protein Swit_2819 (146 aa).

This sequence belongs to the UPF0260 family.

The sequence is that of UPF0260 protein Swit_2819 from Rhizorhabdus wittichii (strain DSM 6014 / CCUG 31198 / JCM 15750 / NBRC 105917 / EY 4224 / RW1) (Sphingomonas wittichii).